The following is a 1200-amino-acid chain: Hyalin (1200 aa).

15 consecutive HYR domains span residues 1-39, 40-123, 124-207, 208-292, 293-376, 377-460, 461-544, 546-629, 630-713, 714-797, 798-881, 882-966, 967-1050, 1051-1133, and 1134-1200; these read SSHN…TVTA, TDTT…NVIE, VDTT…NVIE, VDTT…NVVE, VDTT…TVEE, VDTT…TVIA, VDTT…TISA, VDTT…VINA, VDTT…TIGT, VDTM…TVFA, VDTT…TVTA, QDTT…TVNT, and QDTT…FFSD.

In terms of assembly, homooligomer in presence of calcium. In terms of processing, glycosylated.

Its subcellular location is the secreted. It is found in the extracellular space. The protein resides in the extracellular matrix. In terms of biological role, major constituent of the hyaline layer. The hyaline layer of echinoderm embryos is an extraembryonic matrix that functions as a substrate for cell adhesion through early development. The protein is Hyalin of Strongylocentrotus purpuratus (Purple sea urchin).